Here is an 858-residue protein sequence, read N- to C-terminus: MAFPAPAFSLANLLNGSYGVDTPEEVERVRSEQREEAAAACRNYRPLPAVDVSESVPEDAHSLRTPDGAPSEEVSVEFVTYGAEDYLEKSDDELLVAFETMVKPMRIGQLWCPAFNKCSFISSIAMARALLLAPRTSHRTMKCFEDLVAAIYTKSDFYYDDECEADDVQIDISSRDVPGYSFEPWSRTSGFEPPPICEACDMIMYQCPCFDFNALKKSCAERTFADDYVIEGLDGVVDNATLLSNLGPFLVPVKCQYEKCPTPTVANPPSLNRATDRVDINLVQSICDSTLPTHSNYDDSFHQVFVESADYSIDLDHVRLRQSDLIAKIPDSGHMIPVLNTGSGHKRVGTTKEVLTAIKKRNADVPELGDSVNLSRLSKAVAERFFISYINGNSLASSNFVNVVSNFHDYMEKWKSSGLSYDDLPDLHAENLQFYDHMIKSDVKPVVSDTLNIDRPVPATITYHKKGITSQFSPLFTALFERFQRCLRERIILPVGKISSLEMAGFDVKNKHCLEIDLSKFDKSQGEFHLMIQEHILNGLGCPAPITKWWCDFHRFSYIRDRRAGVGMPISFQRRTGDAFTYFGNTIVTMAEFAWCYDTDQFEKLLFSGDDSLGFSVLPPVGDPSKFTTLFNMEAKVMEPAVPYICSKFLLSDEFGNTFSVPDPLREVQRLGTKKIPYSDNDEFLFAHFMSFVDRLKFLDRMTQSCIDQLSLFFELKYRKSGAEAALMLGAFKKYTANFQSYKELYYSDRRQCELINSFSCVELRIERSSSTKQRKKKDGIERRRDDKRRTPTGSYGGGEEAETKVSQAESTGTRSQKSQREGAFKSQAVPLPTILSSRWFGTDRDVPPCEHGGIVRV.

In terms of domain architecture, RdRp catalytic spans 511–624; that stretch reads KHCLEIDLSK…FSVLPPVGDP (114 aa). The interval 772–830 is disordered; the sequence is TKQRKKKDGIERRRDDKRRTPTGSYGGGEEAETKVSQAESTGTRSQKSQREGAFKSQAV. The span at 779-790 shows a compositional bias: basic and acidic residues; it reads DGIERRRDDKRR. Over residues 805 to 817 the composition is skewed to polar residues; the sequence is KVSQAESTGTRSQ.

The protein belongs to the ssRNA positive-strand viruses RNA-directed RNA polymerase family. As to quaternary structure, interacts with replication protein 1a.

It carries out the reaction RNA(n) + a ribonucleoside 5'-triphosphate = RNA(n+1) + diphosphate. Its function is as follows. RNA-dependent RNA polymerase which replicates the viral genome composed of 3 RNA segments, RNA1, RNA2 and RNA3. The polypeptide is RNA-directed RNA polymerase 2a (Cucumis sativus (Cucumber)).